Here is a 535-residue protein sequence, read N- to C-terminus: Berberine bridge enzyme-like 3 (535 aa).

An N-terminal signal peptide occupies residues 1-19; it reads MKEALFGLYLVLLVSGLEA. Cys-32 and Cys-95 are joined by a disulfide. Residue Asn-52 is glycosylated (N-linked (GlcNAc...) asparagine). The 175-residue stretch at 73-247 folds into the FAD-binding PCMH-type domain; that stretch reads NNKNLLAIVV…LSWKINLVEV (175 aa). A cross-link (6-(S-cysteinyl)-8alpha-(pros-histidyl)-FAD (His-Cys)) is located at residues 110–172; the sequence is HDNEGLSYVS…QTLAFPAGIC (63 aa). N-linked (GlcNAc...) asparagine glycosylation is found at Asn-214, Asn-257, Asn-292, Asn-321, Asn-341, Asn-415, Asn-439, and Asn-444.

Belongs to the oxygen-dependent FAD-linked oxidoreductase family. FAD serves as cofactor. The FAD cofactor is bound via a bicovalent 6-S-cysteinyl, 8alpha-N1-histidyl FAD linkage.

Its subcellular location is the endoplasmic reticulum. The protein resides in the cell membrane. It localises to the secreted. It is found in the cell wall. Its function is as follows. Flavin-dependent oxidoreductase involved in the biosynthetic pathway to 4-hydroxyindole-3-carbonyl nitrile (4-OH-ICN), a cyanogenic metabolite required for inducible pathogen defense. Converts indole cyanohydrin into indole-3-carbonyl nitrile (ICN). The chain is Berberine bridge enzyme-like 3 from Arabidopsis thaliana (Mouse-ear cress).